Here is a 203-residue protein sequence, read N- to C-terminus: Twist-related protein 1 (203 aa).

Positions 1-18 (MMQDVSSSPVSPADDSLS) are enriched in low complexity. Residues 1 to 106 (MMQDVSSSPV…GGGSPQSYEE (106 aa)) form a disordered region. The segment covering 34-43 (RGGRKRRSSR) has biased composition (basic residues). Composition is skewed to gly residues over residues 46–65 (AGGG…GGDE) and 80–100 (GCGG…GGGS). A bHLH domain is found at 109-160 (TQRVMANVRERQRTQSLNEAFAALRKIIPTLPSDKLSKIQTLKLAARYIDFL). Positions 162–192 (QVLQSDELDSKMASCSYVAHERLSYAFSVWR) are sufficient for transactivation activity.

As to quaternary structure, efficient DNA binding requires dimerization with another bHLH protein. Homodimer or heterodimer with E proteins such as TCF3. ID1 binds preferentially to TCF3 but does not interact efficiently with TWIST1 so ID1 levels control the amount of TCF3 available to dimerize with TWIST and thus determine the type of dimer formed.

The protein localises to the nucleus. Functionally, acts as a transcriptional regulator. Inhibits myogenesis by sequestrating E proteins, inhibiting trans-activation by MEF2, and inhibiting DNA-binding by MYOD1 through physical interaction. This interaction probably involves the basic domains of both proteins. Also represses expression of pro-inflammatory cytokines such as TNFA and IL1B. Regulates cranial suture patterning and fusion. Activates transcription as a heterodimer with E proteins. Regulates gene expression differentially, depending on dimer composition. Homodimers induce expression of FGFR2 and POSTN while heterodimers repress FGFR2 and POSTN expression and induce THBS1 expression. Heterodimerization is also required for osteoblast differentiation. Represses the activity of the circadian transcriptional activator: NPAS2-BMAL1 heterodimer. In Saguinus oedipus (Cotton-top tamarin), this protein is Twist-related protein 1 (TWIST1).